Here is a 446-residue protein sequence, read N- to C-terminus: Pre-rRNA-processing protein crb3/ipi3 (446 aa).

5 WD repeats span residues 74–113 (ILPE…LIYF), 116–155 (AHYQ…DQNS), 172–214 (GHKR…LLTT), 216–257 (ALPS…SNNV), and 294–333 (SCQS…VLRR).

It belongs to the WD repeat IPI3/WDR18 family. In terms of assembly, component of the RIX1 complex, composed of ipi1, rix1/ipi2 and crb3/ipi3 in a 1:2:2 stoichiometry. The complex interacts (via rix1) with mdn1 (via its hexameric AAA ATPase ring) and the pre-60S ribosome particles. Interacts with rix1, gcr3 and Las1.

It is found in the nucleus. The protein localises to the chromosome. Functionally, required for both pre-rRNA processing and heterochromatic gene silencing. Component of the RIX1 complex required for processing of ITS2 sequences from 35S pre-rRNA. The chain is Pre-rRNA-processing protein crb3/ipi3 (crb3) from Schizosaccharomyces pombe (strain 972 / ATCC 24843) (Fission yeast).